A 474-amino-acid polypeptide reads, in one-letter code: tRNA-2-methylthio-N(6)-dimethylallyladenosine synthase (474 aa).

Residues 3–120 (KKLHIKTWGC…LPEMIEQIQQ (118 aa)) form the MTTase N-terminal domain. Residues Cys-12, Cys-49, Cys-83, Cys-157, Cys-161, and Cys-164 each contribute to the [4Fe-4S] cluster site. Positions 143–375 (RAEGPSAFVS…QDRITQQAMR (233 aa)) constitute a Radical SAM core domain. Residues 378–441 (RQMLGTVQRI…TNSLRGKFIR (64 aa)) form the TRAM domain.

It belongs to the methylthiotransferase family. MiaB subfamily. In terms of assembly, monomer. [4Fe-4S] cluster is required as a cofactor.

Its subcellular location is the cytoplasm. It carries out the reaction N(6)-dimethylallyladenosine(37) in tRNA + (sulfur carrier)-SH + AH2 + 2 S-adenosyl-L-methionine = 2-methylsulfanyl-N(6)-dimethylallyladenosine(37) in tRNA + (sulfur carrier)-H + 5'-deoxyadenosine + L-methionine + A + S-adenosyl-L-homocysteine + 2 H(+). Its function is as follows. Catalyzes the methylthiolation of N6-(dimethylallyl)adenosine (i(6)A), leading to the formation of 2-methylthio-N6-(dimethylallyl)adenosine (ms(2)i(6)A) at position 37 in tRNAs that read codons beginning with uridine. This Shewanella loihica (strain ATCC BAA-1088 / PV-4) protein is tRNA-2-methylthio-N(6)-dimethylallyladenosine synthase.